Reading from the N-terminus, the 71-residue chain is Phosphatidylinositol N-acetylglucosaminyltransferase subunit Y (71 aa).

Over 1-3 the chain is Cytoplasmic; it reads MFL. Residues 4–26 traverse the membrane as a helical segment; sequence SLPMLTVLIPLVSLAGLFYSASV. At 27 to 44 the chain is on the lumenal side; it reads EDDFPQGCTSTTSLCFYS. A helical membrane pass occupies residues 45 to 65; it reads LLLPITIPVYVFFHLWTWMGI. At 66 to 71 the chain is on the cytoplasmic side; it reads KLFRHN.

Component of the glycosylphosphatidylinositol-N-acetylglucosaminyltransferase (GPI-GnT) complex composed at least by PIGA, PIGC, PIGH, PIGP, PIGQ, PIGY and DPM2. Interacts directly with PIGA; this interaction regulates glycosylphosphatidylinositol-N-acetylglucosaminyltransferase activity. Does not interact with Ras proteins.

The protein resides in the endoplasmic reticulum membrane. It participates in glycolipid biosynthesis; glycosylphosphatidylinositol-anchor biosynthesis. Its function is as follows. Part of the glycosylphosphatidylinositol-N-acetylglucosaminyltransferase (GPI-GnT) complex that catalyzes the transfer of N-acetylglucosamine from UDP-N-acetylglucosamine to phosphatidylinositol and participates in the first step of GPI biosynthesis. May act by regulating the catalytic subunit PIGA. The chain is Phosphatidylinositol N-acetylglucosaminyltransferase subunit Y from Bos taurus (Bovine).